Here is an 88-residue protein sequence, read N- to C-terminus: Cell division topological specificity factor (88 aa).

It belongs to the MinE family.

Functionally, prevents the cell division inhibition by proteins MinC and MinD at internal division sites while permitting inhibition at polar sites. This ensures cell division at the proper site by restricting the formation of a division septum at the midpoint of the long axis of the cell. The sequence is that of Cell division topological specificity factor from Citrobacter koseri (strain ATCC BAA-895 / CDC 4225-83 / SGSC4696).